Consider the following 744-residue polypeptide: Prestin (744 aa).

The Cytoplasmic portion of the chain corresponds to 1 to 75 (MDHAEENEIP…PITKWLPAYK (75 aa)). Residues 76 to 104 (FKEYVLGDLVSGISTGVLQLPQGLAFAML) form a helical membrane-spanning segment. Residues 105–108 (AAVP) lie on the Extracellular side of the membrane. A helical membrane pass occupies residues 109–126 (PVFGLYSSFYPVIMYCFF). At 127 to 137 (GTSRHISIGPF) the chain is on the cytoplasmic side. A helical transmembrane segment spans residues 138 to 149 (AVISLMIGGVAV). The Extracellular portion of the chain corresponds to 150 to 168 (RLVPDDIVIPGGVNATNGT). An Involved in motor function motif is present at residues 158 to 168 (IPGGVNATNGT). 2 N-linked (GlcNAc...) asparagine glycosylation sites follow: N163 and N166. A helical membrane pass occupies residues 169–196 (EARDALRVKVAMSVTLLSGIIQFCLGVC). The Cytoplasmic segment spans residues 197–206 (RFGFVAIYLT). Residues 207–230 (EPLVRGFTTAAAVHVFTSMLKYLF) form a helical membrane-spanning segment. The Extracellular segment spans residues 231 to 241 (GVKTKRYSGIF). The segment at residues 242-253 (SVVYSTVAVLQN) is an intramembrane region (helical). Residues 254–258 (VKNLN) are Extracellular-facing. A helical transmembrane segment spans residues 259–276 (VCSLGVGLMVFGLLLGGK). The Cytoplasmic portion of the chain corresponds to 277-291 (EFNERFKEKLPAPIP). Residues 292-307 (LEFFAVVMGTGISAGF) traverse the membrane as a helical segment. At 308–332 (NLHESYSVDVVGTLPLGLLPPANPD) the chain is on the extracellular side. Residues 333 to 359 (TSLFHLVYVDAIAIAIVGFSVTISMAK) form a helical membrane-spanning segment. Over 360–370 (TLANKHGYQVD) the chain is Cytoplasmic. The chain crosses the membrane as a helical span at residues 371–388 (GNQELIALGICNSIGSLF). The Extracellular segment spans residues 389-396 (QTFSISCS). The chain crosses the membrane as a helical span at residues 397–406 (LSRSLVQEGT). Residue S398 coordinates salicylate. Topologically, residues 407 to 410 (GGKT) are cytoplasmic. A helical transmembrane segment spans residues 411-431 (QLAGCLASLMILLVILATGFL). Over 432 to 436 (FESLP) the chain is Extracellular. The helical transmembrane segment at 437–464 (QAVLSAIVIVNLKGMFMQFSDLPFFWRT) threads the bilayer. Residue S465 is a topological domain, cytoplasmic. The chain crosses the membrane as a helical span at residues 466 to 481 (KIELTIWLTTFVSSLF). Residues 482–484 (LGL) lie on the Extracellular side of the membrane. The helical transmembrane segment at 485-504 (DYGLITAVIIALLTVIYRTQ) threads the bilayer. Residues 505–718 (SPSYTVLGQL…AVLGSQVREA (214 aa)) form an extended region for STAS domain region. The Cytoplasmic segment spans residues 505 to 744 (SPSYTVLGQL…PNATPTTPEA (240 aa)). One can recognise an STAS domain in the interval 525-713 (AYEEVKEIPG…HSIHDAVLGS (189 aa)). The segment at 720 to 744 (AEQETTVLPPQEDMEPNATPTTPEA) is disordered.

Belongs to the SLC26A/SulP transporter (TC 2.A.53) family. As to quaternary structure, homodimer. Interacts (via STAS domain) with CALM; this interaction is calcium-dependent and the STAS domain interacts with only one lobe of CALM which is an elongated conformation. Interacts with MYH1. Specifically expressed in outer hair cells of cochleae (at protein level). Not detected in other cells of the organ of Corti.

It is found in the lateral cell membrane. It carries out the reaction 2 hydrogencarbonate(in) + chloride(out) = 2 hydrogencarbonate(out) + chloride(in). Its activity is regulated as follows. Salicylate, an inhibitor of outer hair cell motility, acts as a competitive antagonist at the prestin anion-binding site. Its function is as follows. Voltage-sensitive motor protein that drives outer hair cell (OHC) electromotility (eM) and participates in sound amplification in the hearing organ. Converts changes in the transmembrane electric potential into mechanical displacements resulting in the coupling of its expansion to movement of a charged voltage sensor across the lipid membrane. The nature of the voltage sensor is not completely clear, and two models compete. In the first model, acts as an incomplete transporter where intracellular chloride anion acts as extrinsic voltage sensor that drives conformational change in the protein which is sufficient to produce a length change in the plane of the membrane and hence in the length of the OHC. The second model in which multiple charged amino acid residues are distributed at the intracellular and extracellular membrane interfaces that form an intrinsic voltage sensor, whose movement produces the non-linear capacitance (NLC). However, the effective voltage sensor may be the result of a hybrid voltage sensor assembled from intrinsic charge (charged residues) and extrinsic charge (bound anion). Notably, binding of anions to the anion-binding pocket partially neutralizes the intrinsic positive charge rather than to form an electrically negative sensor, therefore remaining charge may serve as voltage sensor that, after depolarization, moves from down (expanded state) to up (contracted) conformation, which is accompanied by an eccentric contraction of the intermembrane cross-sectional area of the protein as well as a major increase in the hydrophobic thickness of the protein having as consequences the plasma membrane thickening and the cell contraction after membrane depolarization. The anion-binding pocket transits from the inward-open (Down) state, where it is exposed toward the intracellular solvent in the absence of anion, to the occluded (Up) state upon anion binding. Salicylate competes for the anion-binding site and inhibits the voltage-sensor movement, and therefore inhibits the charge transfer and electromotility by displacing Cl(-) from the anion-binding site and by preventing the structural transitions to the contracted state. In addition, can act as a weak Cl(-)/HCO3(-) antiporter across the cell membrane and so regulate the intracellular pH of the outer hair cells (OHCs), while firstly found as being unable to mediate electrogenic anion transport. Moreover, supports a role in cardiac mechanical amplification serving as an elastic element to enhance the actomyosin- based sarcomere contraction system. This Rattus norvegicus (Rat) protein is Prestin.